A 430-amino-acid chain; its full sequence is Aspartate--tRNA(Asp/Asn) ligase (430 aa).

L-aspartate is bound at residue glutamate 168. Positions 190 to 193 (QLYK) are aspartate. Arginine 212 lines the L-aspartate pocket. ATP is bound by residues 212 to 214 (RAE), 220 to 222 (RHL), and glutamate 353. Glutamate 353 and serine 356 together coordinate Mg(2+). L-aspartate is bound by residues serine 356 and arginine 360. 401–404 (GAER) lines the ATP pocket.

Belongs to the class-II aminoacyl-tRNA synthetase family. Type 2 subfamily. As to quaternary structure, homodimer. Mg(2+) is required as a cofactor.

Its subcellular location is the cytoplasm. It catalyses the reaction tRNA(Asx) + L-aspartate + ATP = L-aspartyl-tRNA(Asx) + AMP + diphosphate. In terms of biological role, aspartyl-tRNA synthetase with relaxed tRNA specificity since it is able to aspartylate not only its cognate tRNA(Asp) but also tRNA(Asn). Reaction proceeds in two steps: L-aspartate is first activated by ATP to form Asp-AMP and then transferred to the acceptor end of tRNA(Asp/Asn). This Archaeoglobus fulgidus (strain ATCC 49558 / DSM 4304 / JCM 9628 / NBRC 100126 / VC-16) protein is Aspartate--tRNA(Asp/Asn) ligase.